Reading from the N-terminus, the 599-residue chain is Beta-(1--&gt;2)glucan export ATP-binding/permease protein NdvA (599 aa).

Residues 21-301 enclose the ABC transmembrane type-1 domain; sequence TITMCVASVL…ISAFINQTVT (281 aa). 5 consecutive transmembrane segments (helical) span residues 22–42, 55–75, 156–176, 248–268, and 276–296; these read ITMC…PVLF, IFSP…AAVF, MRMS…GQLV, MAST…VTKG, and IAFI…SAFI. The ABC transporter domain occupies 335-569; the sequence is IVFDNVTFEF…GGRFSDLLRA (235 aa). Residue 368–375 coordinates ATP; sequence GPTGAGKT.

Belongs to the ABC transporter superfamily. Beta-(1--&gt;2)glucan exporter (TC 3.A.1.108.1) family. Homodimer.

The protein localises to the cell inner membrane. The enzyme catalyses [(1-&gt;2)-beta-D-glucosyl](n)(in) + ATP + H2O = [(1-&gt;2)-beta-D-glucosyl](n)(out) + ADP + phosphate + H(+). Functionally, involved in beta-(1--&gt;2)glucan export. Transmembrane domains (TMD) form a pore in the inner membrane and the ATP-binding domain (NBD) is responsible for energy generation. The protein is Beta-(1--&gt;2)glucan export ATP-binding/permease protein NdvA of Brucella suis biovar 1 (strain 1330).